A 299-amino-acid chain; its full sequence is Light-independent protochlorophyllide reductase iron-sulfur ATP-binding protein (299 aa).

The segment at 1-23 (MSPLDRTPPSLRGQDGEGSVQVH) is disordered. ATP contacts are provided by residues 43–48 (GIGKST) and Lys-72. Ser-47 is a Mg(2+) binding site. [4Fe-4S] cluster-binding residues include Cys-128 and Cys-162. ATP is bound by residues 213 to 214 (NR) and 237 to 239 (PDL).

It belongs to the NifH/BchL/ChlL family. Homodimer. Protochlorophyllide reductase is composed of three subunits; BchL, BchN and BchB. The cofactor is [4Fe-4S] cluster.

It catalyses the reaction chlorophyllide a + oxidized 2[4Fe-4S]-[ferredoxin] + 2 ADP + 2 phosphate = protochlorophyllide a + reduced 2[4Fe-4S]-[ferredoxin] + 2 ATP + 2 H2O. It participates in porphyrin-containing compound metabolism; bacteriochlorophyll biosynthesis (light-independent). Component of the dark-operative protochlorophyllide reductase (DPOR) that uses Mg-ATP and reduced ferredoxin to reduce ring D of protochlorophyllide (Pchlide) to form chlorophyllide a (Chlide). This reaction is light-independent. The L component serves as a unique electron donor to the NB-component of the complex, and binds Mg-ATP. In Roseobacter denitrificans (strain ATCC 33942 / OCh 114) (Erythrobacter sp. (strain OCh 114)), this protein is Light-independent protochlorophyllide reductase iron-sulfur ATP-binding protein.